The primary structure comprises 830 residues: WD repeat-containing protein 75 (830 aa).

WD repeat units lie at residues 4–43 (EENI…KVYS), 47–86 (EECV…KLWD), 90–131 (GILI…QLVS), 145–184 (KELS…YFFK), 193–231 (LSSS…RLWR), 237–276 (KKYT…VEWR), 279–318 (TEKN…IIIH), 324–362 (SAVI…QFYS), and 376–423 (QQEY…KLWM). Lys123 is covalently cross-linked (Glycyl lysine isopeptide (Lys-Gly) (interchain with G-Cter in SUMO2)). Residue Lys427 forms a Glycyl lysine isopeptide (Lys-Gly) (interchain with G-Cter in SUMO2) linkage. WD repeat units follow at residues 430-474 (GFIL…KVWI), 487-525 (GWTC…TIWD), 529-569 (WELK…CCWN), and 574-611 (ALEW…FVFK). Position 466 is an N6-acetyllysine (Lys466). 2 positions are modified to phosphoserine: Ser664 and Ser672. Lys676 is covalently cross-linked (Glycyl lysine isopeptide (Lys-Gly) (interchain with G-Cter in SUMO2)). The disordered stretch occupies residues 763–806 (SAKEIPEDVDMEEEKESEDSDEENDFTEKVQDTSNTGLGEDIIH). Over residues 769–787 (EDVDMEEEKESEDSDEEND) the composition is skewed to acidic residues. 4 positions are modified to phosphoserine: Ser779, Ser782, Ser796, and Ser811.

In terms of assembly, component of the proposed t-UTP subcomplex of the ribosomal small subunit (SSU) processome. SSU processome is composed of more than 70 proteins and the RNA chaperone small nucleolar RNA (snoRNA) U3.

The protein localises to the nucleus. It is found in the nucleolus. Its function is as follows. Ribosome biogenesis factor. Part of the small subunit (SSU) processome, first precursor of the small eukaryotic ribosomal subunit. During the assembly of the SSU processome in the nucleolus, many ribosome biogenesis factors, an RNA chaperone and ribosomal proteins associate with the nascent pre-rRNA and work in concert to generate RNA folding, modifications, rearrangements and cleavage as well as targeted degradation of pre-ribosomal RNA by the RNA exosome. Involved in nucleolar processing of pre-18S ribosomal RNA. Required for optimal pre-ribosomal RNA transcription by RNA polymerase I. This Homo sapiens (Human) protein is WD repeat-containing protein 75.